Reading from the N-terminus, the 1101-residue chain is Rho GTPase-activating protein 30 (1101 aa).

One can recognise a Rho-GAP domain in the interval 20-215 (CDLQEHLQHS…FILTHVDQLF (196 aa)). Disordered regions lie at residues 224 to 243 (EVES…SPED), 300 to 400 (HETK…RAGG), and 451 to 529 (ALQH…AEDG). A compositionally biased stretch (basic and acidic residues) spans 308–318 (RGAEDREDKSN). Residues 360–376 (LENDSIEAAEGEQEPEA) show a composition bias toward acidic residues. Positions 459 to 472 (ASGPGPGPGLGPGP) are enriched in pro residues. Residues 508–520 (DSFSFLEDSSSSE) are compositionally biased toward low complexity. S576 is subject to Phosphoserine. 2 disordered regions span residues 621 to 906 (GPKP…QPSP) and 965 to 991 (CPRP…SWRN). Basic and acidic residues-rich tracts occupy residues 658–694 (GEDK…DRGE), 701–735 (TKVR…KGVE), 759–770 (EEAQVEAGRDLE), and 779–822 (AEEK…DSRS). The segment covering 976–991 (GERAWGSRASRSSWRN) has biased composition (low complexity). Phosphoserine is present on S996. Residues 1050-1101 (LELPSEGAEGSGSRSRLSLPPREPQVPDPLLSSQRRSYAFETQANPGKGEGL) are disordered. A compositionally biased stretch (low complexity) spans 1053-1069 (PSEGAEGSGSRSRLSLP). Polar residues predominate over residues 1080–1094 (LSSQRRSYAFETQAN).

As to quaternary structure, interacts with RHOU in a GTP-independent manner.

It is found in the cytoplasmic vesicle. In terms of biological role, GTPase-activating protein (GAP) for RAC1 and RHOA, but not for CDC42. The chain is Rho GTPase-activating protein 30 (ARHGAP30) from Homo sapiens (Human).